A 206-amino-acid chain; its full sequence is LexA repressor (206 aa).

Positions 28 to 48 (VREIGEAVGLASSSTVHGHLA) form a DNA-binding region, H-T-H motif. Catalysis depends on for autocatalytic cleavage activity residues Ser-128 and Lys-166.

It belongs to the peptidase S24 family. As to quaternary structure, homodimer.

The catalysed reaction is Hydrolysis of Ala-|-Gly bond in repressor LexA.. Represses a number of genes involved in the response to DNA damage (SOS response), including recA and lexA. In the presence of single-stranded DNA, RecA interacts with LexA causing an autocatalytic cleavage which disrupts the DNA-binding part of LexA, leading to derepression of the SOS regulon and eventually DNA repair. This chain is LexA repressor, found in Bacillus velezensis (strain DSM 23117 / BGSC 10A6 / LMG 26770 / FZB42) (Bacillus amyloliquefaciens subsp. plantarum).